The primary structure comprises 472 residues: Methanethiol oxidase (472 aa).

This sequence belongs to the selenium-binding protein family.

Its subcellular location is the nucleus. The protein resides in the cytoplasm. The protein localises to the cytosol. It is found in the membrane. It catalyses the reaction methanethiol + O2 + H2O = hydrogen sulfide + formaldehyde + H2O2 + H(+). The protein operates within organosulfur degradation. In terms of biological role, catalyzes the oxidation of methanethiol, an organosulfur compound known to be produced in substantial amounts by gut bacteria. Selenium-binding protein which may be involved in the sensing of reactive xenobiotics in the cytoplasm. May be involved in intra-Golgi protein transport. The chain is Methanethiol oxidase (selenbp1-b) from Xenopus laevis (African clawed frog).